Consider the following 115-residue polypeptide: Large ribosomal subunit protein uL24 (115 aa).

This sequence belongs to the universal ribosomal protein uL24 family. As to quaternary structure, part of the 50S ribosomal subunit.

Its function is as follows. One of two assembly initiator proteins, it binds directly to the 5'-end of the 23S rRNA, where it nucleates assembly of the 50S subunit. In terms of biological role, one of the proteins that surrounds the polypeptide exit tunnel on the outside of the subunit. This chain is Large ribosomal subunit protein uL24, found in Synechocystis sp. (strain ATCC 27184 / PCC 6803 / Kazusa).